Consider the following 886-residue polypeptide: MADSSESFNIATSPRAGSRRDALTSSPGRDLPPFEDESEGMFGDGVVPEEEEDGEELIGDAMERDYRPISELDRYEVEGLDDEEDVEDLTASQREAAEQSMRMRDREMGRELGRMRRGLLYDSDEEEEDRPARKRRMAERAAEGAPEEDEEMIESIENLEDMKGHTVREWVSMAATRLEIYHRFKNFLRTHVDEHGHNVFKEKISDMCKENKESLPVNYEDLAAREHVLAYFLPEAPAEMLKIFDEAAKEVVLVMYPKYDRIAREIHVRISHLPLVEELRSLRQLHLNQLIRTSGVVTCCTGVLPQLSMVKYNCNKCNFILGPFFQSQNQEVRPGSCPECQSFGPFEINMEETVYQNYQRITIQESPGKVAAGRLPRSKDAILLADLVDSCKPGDEIELTGIYHNNYDGSLNTANGFPVFATVILANHITKKDDKVAVGELTDEDVKAIVALSKDERIGERIFASIAPSIYGHEDIKRGLALALFGGEAKNPGGKHKVRGDINVLLCGDPGTAKSQFLKYVEKVASRAVFTTGQGASAVGLTAYVQRHPVTKEWTLEAGALVLADRGVCLIDEFDKMNDQDRTSIHEAMEQQSISISKAGIVTSLQARCTVIAASNPIGGRYDPSLTFSENVDLTEPIVSRFDILCVVRDTVDPVQDEMLARFVVSSHIKHHPSSKDIANGDAAEFALPNTFGVEALPQEVLKKYIMYAKEKIRPKLNQMDQDKVAKMYSDLRKESMATGSIPITVRHIESMIRMAEAHARMHLRDYVVEDDVNMAIRVMLESFIDTQKFSVMRSMRKTFARYLAFRRDNNELLLFVLKQLIAEQVTYQRNRYGAQQDTIEVPEKDLVDKARQINIHNLSAFYDSDLFKMNKFTHDVKKKLIIQQF.

Positions 1–12 (MADSSESFNIAT) are enriched in polar residues. 3 disordered regions span residues 1 to 65 (MADS…MERD), 77 to 104 (VEGL…MRMR), and 120 to 151 (LYDS…EDEE). Acidic residues-rich tracts occupy residues 47–58 (VPEEEEDGEELI) and 78–88 (EGLDDEEDVED). Basic and acidic residues predominate over residues 95-104 (EAAEQSMRMR). The segment at 314-340 (CNKCNFILGPFFQSQNQEVRPGSCPEC) adopts a C4-type zinc-finger fold. In terms of domain architecture, MCM spans 458 to 665 (IGERIFASIA…QDEMLARFVV (208 aa)). ADP contacts are provided by Ser-515 and Gln-516. The Arginine finger signature appears at 640–643 (SRFD).

The protein belongs to the MCM family. Component of the mcm2-7 complex (RLF-M). The complex forms a toroidal hexameric ring with the proposed subunit order mcm2-mcm6-mcm4-mcm7-mcm3-mcm5. Component of the replisome complex. Component of the CMG helicase complex, composed of the mcm2-7 complex, the GINS complex and cdc45. In terms of processing, may be in a phosphorylated state in the mitotic mcm complex. Phosphorylated in the interphase mcm complex. Phosphorylated by the cdc7-dbf4 and cdc7-dbf4b complexes.

It is found in the nucleus. It localises to the chromosome. It catalyses the reaction ATP + H2O = ADP + phosphate + H(+). Its function is as follows. Acts as a component of the MCM2-7 complex (MCM complex) which is the replicative helicase essential for 'once per cell cycle' DNA replication initiation and elongation in eukaryotic cells. Core component of CDC45-MCM-GINS (CMG) helicase, the molecular machine that unwinds template DNA during replication, and around which the replisome is built. The active ATPase sites in the MCM2-7 ring are formed through the interaction surfaces of two neighboring subunits such that a critical structure of a conserved arginine finger motif is provided in trans relative to the ATP-binding site of the Walker A box of the adjacent subunit. The six ATPase active sites, however, are likely to contribute differentially to the complex helicase activity. Required for the entry in S phase and for cell division. The protein is DNA replication licensing factor mcm2 (mcm2) of Xenopus laevis (African clawed frog).